Reading from the N-terminus, the 793-residue chain is DnaJ homolog subfamily C member 10 (793 aa).

The first 32 residues, 1–32, serve as a signal peptide directing secretion; the sequence is MGVWLNKDDYIRDLKRIILCFLIVYMAILVGT. Positions 35 to 100 constitute a J domain; that stretch reads DFYSLLGVSK…DLRKKYDKYG (66 aa). The Thioredoxin 1 domain occupies 130–232; sequence EIITLERREF…ESLVSFAMQH (103 aa). Residues cysteine 158 and cysteine 161 are joined by a disulfide bond. Trxb stretches follow at residues 235–350 and 348–463; these read STVT…LPDF and PDFE…PQNF. Thioredoxin domains follow at residues 454-553, 557-662, and 671-778; these read HVTT…IEDL, SVVS…SLRI, and VSTD…ISEK. A disulfide bridge links cysteine 480 with cysteine 483. N-linked (GlcNAc...) asparagine glycosylation occurs at asparagine 530. 2 disulfide bridges follow: cysteine 588/cysteine 591 and cysteine 700/cysteine 703. A Prevents secretion from ER motif is present at residues 790-793; that stretch reads KDEL.

As to quaternary structure, interacts with EDEM1. Interacts with HSPA5 (via its J domain).

Its subcellular location is the endoplasmic reticulum lumen. Its function is as follows. Endoplasmic reticulum disulfide reductase involved both in the correct folding of proteins and degradation of misfolded proteins. Required for efficient folding of proteins in the endoplasmic reticulum by catalyzing the removal of non-native disulfide bonds formed during the folding of proteins, such as LDLR. Also involved in endoplasmic reticulum-associated degradation (ERAD) by reducing incorrect disulfide bonds in misfolded glycoproteins recognized by EDEM1. Interaction with HSPA5 is required its activity, not for the disulfide reductase activity, but to facilitate the release of DNAJC10 from its substrate. Promotes apoptotic signaling pathway in response to endoplasmic reticulum stress. This chain is DnaJ homolog subfamily C member 10 (DNAJC10), found in Homo sapiens (Human).